The chain runs to 177 residues: KxDL motif-containing protein 1 (177 aa).

Met1 is modified (N-acetylmethionine). The segment at 100–177 (SHIPEGSFLE…TDDEEETHEE (78 aa)) is disordered. Residues 125–145 (ATSEQSTGSCDTSPDTVSPSL) show a composition bias toward polar residues.

This sequence belongs to the KXD1 family. Component of the BLOC-one-related complex (BORC) which is composed of BLOC1S1, BLOC1S2, BORCS5, BORCS6, BORCS7, BORCS8, KXD1 and SNAPIN. Associates with the BLOC-1 complex. Interacts with BLOC1S1. Interacts with DTNBP1/BLOC1S7 (via coiled-coil domain). Widely expressed.

It localises to the lysosome membrane. As part of the BORC complex may play a role in lysosomes movement and localization at the cell periphery. Associated with the cytosolic face of lysosomes, the BORC complex may recruit ARL8B and couple lysosomes to microtubule plus-end-directed kinesin motor. May also be involved in the biogenesis of lysosome-related organelles such as melanosomes. The chain is KxDL motif-containing protein 1 (Kxd1) from Mus musculus (Mouse).